Here is a 152-residue protein sequence, read N- to C-terminus: CASP-like protein 5B3 (152 aa).

The Cytoplasmic portion of the chain corresponds to 1-21 (MIDIPGTPGTLTGLVLRISQC). 2 helical membrane-spanning segments follow: residues 22–42 (VFAA…SFTA) and 43–63 (FCYL…LAIL). The Extracellular segment spans residues 64–77 (DTFALVRKKTLLSP). A helical transmembrane segment spans residues 78-98 (VLVSLFVVGDWVTSTLSLAGA). The Cytoplasmic portion of the chain corresponds to 99–127 (SSSAGITVLYFGDLGSCSFEAECWKYQLS). The helical transmembrane segment at 128–148 (VALAFLCWITIAVSSLTTLWL) threads the bilayer. At 149–152 (LASA) the chain is on the extracellular side.

It belongs to the Casparian strip membrane proteins (CASP) family. As to quaternary structure, homodimer and heterodimers. As to expression, expressed in the stele of the root and in leaves.

It localises to the cell membrane. The sequence is that of CASP-like protein 5B3 from Arabidopsis thaliana (Mouse-ear cress).